The chain runs to 197 residues: Putative glutathione-dependent formaldehyde-activating enzyme (197 aa).

In terms of domain architecture, CENP-V/GFA spans 22–171 (FPGGKLYCHC…LKSLGLENYD (150 aa)). Residues C29, C31, C50, C52, C55, C97, and C100 each coordinate Zn(2+).

It belongs to the Gfa family. The cofactor is Zn(2+).

The catalysed reaction is S-(hydroxymethyl)glutathione = glutathione + formaldehyde. The protein operates within one-carbon metabolism; formaldehyde degradation; formate from formaldehyde (glutathione route): step 1/3. Catalyzes the condensation of formaldehyde and glutathione to S-hydroxymethylglutathione. This is Putative glutathione-dependent formaldehyde-activating enzyme from Emericella nidulans (strain FGSC A4 / ATCC 38163 / CBS 112.46 / NRRL 194 / M139) (Aspergillus nidulans).